The primary structure comprises 608 residues: Aspartate--tRNA(Asp/Asn) ligase (608 aa).

Glu187 contacts L-aspartate. The segment at 211–214 (QQFK) is aspartate. Residues Arg233 and His461 each contribute to the L-aspartate site. Residue 233 to 235 (RDE) participates in ATP binding. Glu495 contributes to the ATP binding site. Arg502 provides a ligand contact to L-aspartate. Position 547 to 550 (547 to 550 (GLDR)) interacts with ATP.

It belongs to the class-II aminoacyl-tRNA synthetase family. Type 1 subfamily. Homodimer.

It is found in the cytoplasm. The enzyme catalyses tRNA(Asx) + L-aspartate + ATP = L-aspartyl-tRNA(Asx) + AMP + diphosphate. In terms of biological role, aspartyl-tRNA synthetase with relaxed tRNA specificity since it is able to aspartylate not only its cognate tRNA(Asp) but also tRNA(Asn). Reaction proceeds in two steps: L-aspartate is first activated by ATP to form Asp-AMP and then transferred to the acceptor end of tRNA(Asp/Asn). In Chlorobium phaeobacteroides (strain BS1), this protein is Aspartate--tRNA(Asp/Asn) ligase.